Reading from the N-terminus, the 178-residue chain is Large ribosomal subunit protein uL6 (178 aa).

The protein belongs to the universal ribosomal protein uL6 family. As to quaternary structure, part of the 50S ribosomal subunit.

This protein binds to the 23S rRNA, and is important in its secondary structure. It is located near the subunit interface in the base of the L7/L12 stalk, and near the tRNA binding site of the peptidyltransferase center. The chain is Large ribosomal subunit protein uL6 from Lactococcus lactis subsp. cremoris (strain SK11).